Here is a 154-residue protein sequence, read N- to C-terminus: Protein X (154 aa).

Residues 26–45 form a disordered region; it reads RGRPVSGPLGSLSSSSPSAV. Positions 31–43 are enriched in low complexity; the sequence is SGPLGSLSSSSPS. The interval 68 to 117 is mitochondrial targeting sequence; that stretch reads PCALRFTSARRMETTVNAHQILPKILHKRTLGLSTMSTTDLEAYFKDCLF.

The protein belongs to the orthohepadnavirus protein X family. In terms of assembly, may form homodimer. May interact with host CEBPA, CFLAR, CREB1, DDB1, E4F1, HBXIP, HSPD1/HSP60, NFKBIA, POLR2E and SMAD4. Interacts with host SMC5-SMC6 complex and induces its degradation. Interacts with host TRPC4AP; leading to prevent ubiquitination of TRPC4AP. Interacts with host PLSCR1; this interaction promotes ubiquitination and degradation of HBx and impairs HBx-mediated cell proliferation. A fraction may be phosphorylated in insect cells and HepG2 cells, a human hepatoblastoma cell line. Phosphorylated in vitro by host protein kinase C or mitogen-activated protein kinase. N-acetylated in insect cells.

The protein resides in the host cytoplasm. It localises to the host nucleus. The protein localises to the host mitochondrion. In terms of biological role, multifunctional protein that plays a role in silencing host antiviral defenses and promoting viral transcription. Does not seem to be essential for HBV infection. May be directly involved in development of cirrhosis and liver cancer (hepatocellular carcinoma). Most of cytosolic activities involve modulation of cytosolic calcium. The effect on apoptosis is controversial depending on the cell types in which the studies have been conducted. May induce apoptosis by localizing in mitochondria and causing loss of mitochondrial membrane potential. May also modulate apoptosis by binding host CFLAR, a key regulator of the death-inducing signaling complex (DISC). Promotes viral transcription by using the host E3 ubiquitin ligase DDB1 to target the SMC5-SMC6 complex to proteasomal degradation. This host complex would otherwise bind to viral episomal DNA, and prevents its transcription. Moderately stimulates transcription of many different viral and cellular transcription elements. Promoters and enhancers stimulated by HBx contain DNA binding sites for NF-kappa-B, AP-1, AP-2, c-EBP, ATF/CREB, or the calcium-activated factor NF-AT. This chain is Protein X, found in Hepatitis B virus genotype D subtype ayw (isolate Japan/JYW796/1988) (HBV-D).